The primary structure comprises 844 residues: MEPPAAPSERSLSLSLPGPREGQATLKPPPQHLWRQPRTPIRIQQRGYSDSAERSEPERSPHRPIERADAVDTGDRPGLRTTRMSWPSSFHGTGTGGGSSRRLEAENGPTPSPGRSPLDSQASPGLMLHAGAATSQRRESFLYRSDSDYDMSPKTMSRNSSVASEAHGEDLIVTPFAQVLASLRNVRSNFSLLTNVPIPSNKRSPLGGPPSVCKATLSEETCQQLARETLEELDWCLEQLETMQTYRSVSEMASHKFKRMLNRELTHLSEMSRSGNQVSEYISNTFLDKQHEVEIPSPTPRQRPFQQPPPAAVQQAQPMSQITGLKKLVHTGSLNINVPRFGVKTDQEDLLAQELENLSKWGLNIFCVSEYAGGRSLSCIMYTIFQERDLLKKFHIPVDTMMTYMLTLEDHYHADVAYHNSLHAADVLQSTHVLLATPALDAVFTDLEILAALFAAAIHDVDHPGVSNQFLINTNSELALMYNDESVLENHHLAVGFKLLQEENCDIFQNLSKRQRQSLRKMVIDMVLATDMSKHMTLLADLKTMVETKKVTSSGVLLLDNYSDRIQVLRNMVHCADLSNPTKPLELYRQWTDRIMAEFFQQGDRERERGMEISPMCDKHTASVEKSQVGFIDYIVHPLWETWADLVHPDAQDILDTLEDNRDWYHSAIRQSPSPTLEEEPGVLSDPALPDKFQFELTLEEEDEEDSLEVPGLPCTEETLLAPHDTRAQAMEQSKVKGQSPAVVEVAESLKQETASAHGAPEESAEAVGHSFSLETSILPDLRTLSPSEEAQGLLGLPSMAAEVEAPRDHLAAMRACSACSGTSGDNSAVISAPGRWGSGGDPA.

Positions 1-124 are disordered; that stretch reads MEPPAAPSER…RSPLDSQASP (124 aa). S13 carries the post-translational modification Phosphoserine. Residues 36 to 46 show a composition bias toward low complexity; the sequence is QPRTPIRIQQR. Basic and acidic residues predominate over residues 51 to 78; the sequence is SAERSEPERSPHRPIERADAVDTGDRPG. A compositionally biased stretch (polar residues) spans 82 to 91; that stretch reads TRMSWPSSFH. Residues S147, S152, S160, S204, and S333 each carry the phosphoserine modification. One can recognise a PDEase domain in the interval 343-672; that stretch reads VKTDQEDLLA…DWYHSAIRQS (330 aa). K344 is covalently cross-linked (Glycyl lysine isopeptide (Lys-Gly) (interchain with G-Cter in SUMO)). H419 functions as the Proton donor in the catalytic mechanism. 3',5'-cyclic AMP is bound at residue H419. AMP-binding residues include H419 and H423. Zn(2+)-binding residues include H423, H459, D460, and D577. Positions 460, 577, 628, and 631 each coordinate AMP. A Mg(2+)-binding site is contributed by D460. D460 lines the Mn(2+) pocket. Residues Q628 and F631 each contribute to the 3',5'-cyclic AMP site. Phosphoserine occurs at positions 672 and 674. The segment at 819–844 is disordered; sequence ACSGTSGDNSAVISAPGRWGSGGDPA. A compositionally biased stretch (polar residues) spans 820 to 830; sequence CSGTSGDNSAV.

The protein belongs to the cyclic nucleotide phosphodiesterase family. PDE4 subfamily. In terms of assembly, interacts with LYN (via SH3 domain). Interacts with ARRB2. Zn(2+) is required as a cofactor. Mg(2+) serves as cofactor. It depends on Mn(2+) as a cofactor. Post-translationally, proteolytically cleaved by CASP3.

It localises to the cytoplasm. It is found in the cytosol. Its subcellular location is the membrane. It carries out the reaction 3',5'-cyclic AMP + H2O = AMP + H(+). It participates in purine metabolism; 3',5'-cyclic AMP degradation; AMP from 3',5'-cyclic AMP: step 1/1. Its activity is regulated as follows. Inhibited by rolipram and diazepam. Its function is as follows. Hydrolyzes the second messenger 3',5'-cyclic AMP (cAMP), which is a key regulator of many important physiological processes. Efficiently hydrolyzes cAMP. This is 3',5'-cyclic-AMP phosphodiesterase 4A (Pde4a) from Mus musculus (Mouse).